The chain runs to 179 residues: Acireductone dioxygenase (179 aa).

Fe(2+) contacts are provided by His-88, His-90, Glu-94, and His-133. The Ni(2+) site is built by His-88, His-90, Glu-94, and His-133.

The protein belongs to the acireductone dioxygenase (ARD) family. As to quaternary structure, monomer. Interacts with MMP14. Fe(2+) is required as a cofactor. Ni(2+) serves as cofactor.

The protein resides in the cytoplasm. Its subcellular location is the nucleus. It localises to the cell membrane. The catalysed reaction is 1,2-dihydroxy-5-(methylsulfanyl)pent-1-en-3-one + O2 = 4-methylsulfanyl-2-oxobutanoate + formate + 2 H(+). It carries out the reaction 1,2-dihydroxy-5-(methylsulfanyl)pent-1-en-3-one + O2 = 3-(methylsulfanyl)propanoate + CO + formate + 2 H(+). Its pathway is amino-acid biosynthesis; L-methionine biosynthesis via salvage pathway; L-methionine from S-methyl-5-thio-alpha-D-ribose 1-phosphate: step 5/6. Functionally, catalyzes 2 different reactions between oxygen and the acireductone 1,2-dihydroxy-3-keto-5-methylthiopentene (DHK-MTPene) depending upon the metal bound in the active site. Fe-containing acireductone dioxygenase (Fe-ARD) produces formate and 2-keto-4-methylthiobutyrate (KMTB), the alpha-ketoacid precursor of methionine in the methionine recycle pathway. Ni-containing acireductone dioxygenase (Ni-ARD) produces methylthiopropionate, carbon monoxide and formate, and does not lie on the methionine recycle pathway. This chain is Acireductone dioxygenase (adi1), found in Xenopus laevis (African clawed frog).